The primary structure comprises 267 residues: Nus factor SuhB (267 aa).

Mg(2+)-binding residues include Glu67, Asp84, and Leu86. Substrate is bound at residue Glu67. Substrate-binding positions include 86 to 89, Arg183, and Asp212; that span reads LDGT.

It belongs to the inositol monophosphatase superfamily. As to quaternary structure, homodimer. The rRNA transcription and antitermination complex (rrnTAC) consists of RNA polymerase (RNAP), NusA, NusB, NusE (rpsJ), NusG, SubB, ribosomal protein S4, DNA and precursor rRNA; S4 is more flexible than other subunits. It depends on Mg(2+) as a cofactor.

It is found in the cytoplasm. It catalyses the reaction a myo-inositol phosphate + H2O = myo-inositol + phosphate. Functionally, part of the processive rRNA transcription and antitermination complex (rrnTAC). The complex forms an RNA-chaperone ring around the RNA exit tunnel of RNA polymerase (RNAP). It supports rapid transcription and antitermination of rRNA operons, cotranscriptional rRNA folding, and annealing of distal rRNA regions to allow correct ribosome biogenesis. This subunit may play a central role in organizing the structure. IMPase activity is not required for its Nus factor function. The polypeptide is Nus factor SuhB (suhB) (Escherichia coli O157:H7).